Consider the following 421-residue polypeptide: Gamma-glutamyl phosphate reductase (421 aa).

The protein belongs to the gamma-glutamyl phosphate reductase family.

It localises to the cytoplasm. The catalysed reaction is L-glutamate 5-semialdehyde + phosphate + NADP(+) = L-glutamyl 5-phosphate + NADPH + H(+). Its pathway is amino-acid biosynthesis; L-proline biosynthesis; L-glutamate 5-semialdehyde from L-glutamate: step 2/2. Its function is as follows. Catalyzes the NADPH-dependent reduction of L-glutamate 5-phosphate into L-glutamate 5-semialdehyde and phosphate. The product spontaneously undergoes cyclization to form 1-pyrroline-5-carboxylate. The chain is Gamma-glutamyl phosphate reductase from Ruegeria sp. (strain TM1040) (Silicibacter sp.).